The sequence spans 430 residues: Tol-Pal system protein TolB (430 aa).

The first 26 residues, 1–26, serve as a signal peptide directing secretion; that stretch reads MSLMTKLGLRTLVASCLIAVGGAANA.

This sequence belongs to the TolB family. As to quaternary structure, the Tol-Pal system is composed of five core proteins: the inner membrane proteins TolA, TolQ and TolR, the periplasmic protein TolB and the outer membrane protein Pal. They form a network linking the inner and outer membranes and the peptidoglycan layer.

It localises to the periplasm. Part of the Tol-Pal system, which plays a role in outer membrane invagination during cell division and is important for maintaining outer membrane integrity. In Paraburkholderia xenovorans (strain LB400), this protein is Tol-Pal system protein TolB.